A 268-amino-acid polypeptide reads, in one-letter code: Testis-specific serine/threonine-protein kinase 3 (268 aa).

One can recognise a Protein kinase domain in the interval 10 to 265 (YQLGKTIGEG…IEEVSWHPWL (256 aa)). Residues 16–24 (IGEGTYSKV) and lysine 39 each bind ATP. Aspartate 134 acts as the Proton acceptor in catalysis. Residue serine 166 is modified to Phosphoserine. A Phosphothreonine modification is found at threonine 168.

Belongs to the protein kinase superfamily. CAMK Ser/Thr protein kinase family. It depends on Mg(2+) as a cofactor. Mn(2+) is required as a cofactor. Autophosphorylated at Ser-166. Phosphorylation at Thr-168 by PDPK1 activates the serine/threonine protein kinase activity.

It localises to the cell projection. The protein resides in the cilium. The protein localises to the flagellum. It catalyses the reaction L-seryl-[protein] + ATP = O-phospho-L-seryl-[protein] + ADP + H(+). It carries out the reaction L-threonyl-[protein] + ATP = O-phospho-L-threonyl-[protein] + ADP + H(+). With respect to regulation, activated by phosphorylation on Thr-168 by PDPK1. Serine/threonine protein kinase required for spermatid development and male fertility. The polypeptide is Testis-specific serine/threonine-protein kinase 3 (Homo sapiens (Human)).